A 130-amino-acid chain; its full sequence is Small ribosomal subunit protein uS11 (130 aa).

The protein belongs to the universal ribosomal protein uS11 family. As to quaternary structure, part of the 30S ribosomal subunit. Interacts with proteins S7 and S18. Binds to IF-3.

Its function is as follows. Located on the platform of the 30S subunit, it bridges several disparate RNA helices of the 16S rRNA. Forms part of the Shine-Dalgarno cleft in the 70S ribosome. The chain is Small ribosomal subunit protein uS11 from Buchnera aphidicola subsp. Cinara cedri (strain Cc).